Consider the following 414-residue polypeptide: Diaminopimelate decarboxylase (414 aa).

Lys-52 is subject to N6-(pyridoxal phosphate)lysine. Residues Gly-231 and 265 to 268 contribute to the pyridoxal 5'-phosphate site; that span reads EPGR. Substrate-binding residues include Arg-268, Arg-304, and Tyr-308. The active-site Proton donor is Cys-334. Substrate contacts are provided by Glu-335 and Tyr-362. Tyr-362 contributes to the pyridoxal 5'-phosphate binding site.

The protein belongs to the Orn/Lys/Arg decarboxylase class-II family. LysA subfamily. Homodimer. Requires pyridoxal 5'-phosphate as cofactor.

It carries out the reaction meso-2,6-diaminopimelate + H(+) = L-lysine + CO2. The protein operates within amino-acid biosynthesis; L-lysine biosynthesis via DAP pathway; L-lysine from DL-2,6-diaminopimelate: step 1/1. Specifically catalyzes the decarboxylation of meso-diaminopimelate (meso-DAP) to L-lysine. The chain is Diaminopimelate decarboxylase from Neisseria meningitidis serogroup B (strain ATCC BAA-335 / MC58).